We begin with the raw amino-acid sequence, 679 residues long: MSAPKNEMYYSLLEWFKTLNLNAPHADAESLADGVALAQALNQFAPESFTDAWLSKIKASAVGSNWRLRMSNLKKVTQSVYDYYSDVLNYSLSDFSKPDLQRIAEKCDLGELERLLQLVLGCAVNCAEKQSYITEIMCLEEELQANIMRALQELEATRQASTPEGGVASSLSRGSRTGLLDSKAVQEDRDALAQKCFETEKKMLLLIDEKTNLQQELHKLQQEFARLEQHSTVIGDDGVSLGPVQTGSVRYNELRRQLDLLKEELLQSEGAREDLKIKAQQQDTDLLHMQMRIEELMKSSAEVTTLKDEVDVLRESNDKLKICEAQLDTYKKKLEDYNDLKKQVKILEERSADYVQQNAQFEEDAKRYANTKGQVELFKKEIQDLHAKLDAESSKNVKLEFDNKNLEGKNLALQRAKDSLLKERDNLREAVDELKCGQLSSNTALTGTTVSRELQPSATVEKLQRLEAENKALREGQGGQTALAQLLDDANKRCENLREQLKTANERILSLSHASQSDDPILKESEFGKQIKQLMELNEQKTLQLEEAVTQSTSLQCKVTQLETNLSAREQEILVYDAKYRKCVEKAKEVIKSIDPRIASALDASVLEKSADLVEAEPKPKMSVMEEQLMTSAFYRLGVNAQRDAIDSKLAILMGSGQTFLARQRQSAPRKSLSAMKSK.

The 118-residue stretch at 6 to 123 (NEMYYSLLEW…RLLQLVLGCA (118 aa)) folds into the Calponin-homology (CH) domain. Coiled coils occupy residues 135 to 437 (EIMC…LKCG) and 480 to 574 (QTAL…QEIL).

It belongs to the hook family. In terms of assembly, homodimer. Interacts with microtubules via its N-terminus.

The protein localises to the cytoplasm. Its subcellular location is the cytoskeleton. The protein resides in the endosome. It localises to the synapse. Involved in endocytic trafficking by stabilizing organelles of the endocytic pathway. Probably acts as a cytoskeletal linker protein required to tether endosome vesicles to the cytoskeleton. Involved in modulation of endocytosis at stages required for down-regulation of membrane proteins that control synapse size. Not involved in synaptic vesicle recycling. Required in R7 cells for boss endocytosis into multivesicular bodies (MVBs). Has a role in regulating adult longevity. This chain is Protein hook, found in Drosophila sechellia (Fruit fly).